A 199-amino-acid chain; its full sequence is Protein GrpE (199 aa).

A compositionally biased stretch (basic and acidic residues) spans M1–N24. The interval M1–E52 is disordered.

The protein belongs to the GrpE family. As to quaternary structure, homodimer.

It is found in the cytoplasm. Functionally, participates actively in the response to hyperosmotic and heat shock by preventing the aggregation of stress-denatured proteins, in association with DnaK and GrpE. It is the nucleotide exchange factor for DnaK and may function as a thermosensor. Unfolded proteins bind initially to DnaJ; upon interaction with the DnaJ-bound protein, DnaK hydrolyzes its bound ATP, resulting in the formation of a stable complex. GrpE releases ADP from DnaK; ATP binding to DnaK triggers the release of the substrate protein, thus completing the reaction cycle. Several rounds of ATP-dependent interactions between DnaJ, DnaK and GrpE are required for fully efficient folding. The sequence is that of Protein GrpE from Legionella pneumophila (strain Lens).